Here is a 122-residue protein sequence, read N- to C-terminus: Large ribosomal subunit protein uL14 (122 aa).

It belongs to the universal ribosomal protein uL14 family. Part of the 50S ribosomal subunit. Forms a cluster with proteins L3 and L19. In the 70S ribosome, L14 and L19 interact and together make contacts with the 16S rRNA in bridges B5 and B8.

Functionally, binds to 23S rRNA. Forms part of two intersubunit bridges in the 70S ribosome. This is Large ribosomal subunit protein uL14 from Caldicellulosiruptor bescii (strain ATCC BAA-1888 / DSM 6725 / KCTC 15123 / Z-1320) (Anaerocellum thermophilum).